The sequence spans 196 residues: Pyridoxal 5'-phosphate synthase subunit PdxT (196 aa).

46-48 (GES) is an L-glutamine binding site. C78 functions as the Nucleophile in the catalytic mechanism. Residues R105 and 133 to 134 (IR) each bind L-glutamine. Catalysis depends on charge relay system residues H169 and E171.

The protein belongs to the glutaminase PdxT/SNO family. In terms of assembly, in the presence of PdxS, forms a dodecamer of heterodimers. Only shows activity in the heterodimer.

The enzyme catalyses aldehydo-D-ribose 5-phosphate + D-glyceraldehyde 3-phosphate + L-glutamine = pyridoxal 5'-phosphate + L-glutamate + phosphate + 3 H2O + H(+). It catalyses the reaction L-glutamine + H2O = L-glutamate + NH4(+). Its pathway is cofactor biosynthesis; pyridoxal 5'-phosphate biosynthesis. Catalyzes the hydrolysis of glutamine to glutamate and ammonia as part of the biosynthesis of pyridoxal 5'-phosphate. The resulting ammonia molecule is channeled to the active site of PdxS. The polypeptide is Pyridoxal 5'-phosphate synthase subunit PdxT (Geobacillus stearothermophilus (Bacillus stearothermophilus)).